Here is a 136-residue protein sequence, read N- to C-terminus: Putative pre-16S rRNA nuclease (136 aa).

Belongs to the YqgF nuclease family.

It is found in the cytoplasm. Could be a nuclease involved in processing of the 5'-end of pre-16S rRNA. This is Putative pre-16S rRNA nuclease from Francisella tularensis subsp. mediasiatica (strain FSC147).